Reading from the N-terminus, the 537-residue chain is Tyrosine-protein phosphatase CDC14 homolog (537 aa).

The 164-residue stretch at 182–345 (DFNWISPKFI…QVHFRAYFYE (164 aa)) folds into the Tyrosine-protein phosphatase domain. Cysteine 286 serves as the catalytic Phosphocysteine intermediate. A disordered region spans residues 359-537 (EPLATPPRHP…PKPSKSRLIS (179 aa)). Positions 370-382 (NATNGTSQSNIST) are enriched in polar residues. Low complexity predominate over residues 400-411 (PPSARRLPSASS). Polar residues predominate over residues 421 to 437 (ASKQSIQNENKASYSSY). Threonine 453 bears the Phosphothreonine mark. 2 positions are modified to phosphoserine: serine 468 and serine 470. Positions 490 to 502 (RRTSGNRWSSGSS) are enriched in low complexity. Serine 513 bears the Phosphoserine mark. Polar residues predominate over residues 514 to 523 (MSSLNNTSNG). The segment covering 526–537 (AKPKPSKSRLIS) has biased composition (basic residues).

Belongs to the protein-tyrosine phosphatase family. Non-receptor class CDC14 subfamily. In terms of assembly, interacts with ark1 at the kinetochores. Interacts with bir1, cdc25, mid1, nbl1, pic1, and rad24. Phosphorylated by cds1, chk1, pmk1, and cdc2 upon Hydroxylurea and H(2)O(2) stress treatment. Phosphorylation regulates the nucleolar-to-nucleoplasmic transition. Is able to autodephosphorylate.

The protein resides in the nucleus. It is found in the nucleolus. It localises to the cytoplasm. The protein localises to the cytoskeleton. Its subcellular location is the microtubule organizing center. The protein resides in the spindle pole body. The catalysed reaction is O-phospho-L-tyrosyl-[protein] + H2O = L-tyrosyl-[protein] + phosphate. Protein phosphatase which antagonizes mitotic cyclin-dependent kinase cdc2, the inactivation of which is essential for exit from mitosis. To access its substrates, is released from nucleolar sequestration during mitosis. Plays an essential in coordinating the nuclear division cycle with cytokinesis through the cytokinesis checkpoint. Involved in chromosome segregation, where it is required for meiosis I spindle dissambly as well as for establishing two consecutive chromosome segregation phases. Allows damaged actomyosin rings to be maintained to facilitate completion of cell division in response to minor perturbation of the cell division machinery. Dephosphorylates the mitotic inducer cdc25 for its rapid degradation. Down-regulation of cdc25 activity ensures a prompt inactivation of mitotic cdc2 complexes to trigger cell division. Also dephosphorylates cdc2-phosphorylated nsk1, allowing nsk1-binding to kinetochores and spindle. Dephosphorylates ase1, which is essential for spindle midzone assembly and for continuous extension of the anaphase spindle. Tethered to the contractile ring by mid1, where it dephosphorylates cdc15. The protein is Tyrosine-protein phosphatase CDC14 homolog (clp1) of Schizosaccharomyces pombe (strain 972 / ATCC 24843) (Fission yeast).